The primary structure comprises 41 residues: Large ribosomal subunit protein bL36A (41 aa).

The protein belongs to the bacterial ribosomal protein bL36 family.

This Vibrio cholerae serotype O1 (strain ATCC 39541 / Classical Ogawa 395 / O395) protein is Large ribosomal subunit protein bL36A.